Reading from the N-terminus, the 81-residue chain is Photosystem I iron-sulfur center (81 aa).

2 consecutive 4Fe-4S ferredoxin-type domains span residues methionine 1–tryptophan 31 and isoleucine 39–tyrosine 68. [4Fe-4S] cluster is bound by residues cysteine 11, cysteine 14, cysteine 17, cysteine 21, cysteine 48, cysteine 51, cysteine 54, and cysteine 58.

As to quaternary structure, the eukaryotic PSI reaction center is composed of at least 11 subunits. [4Fe-4S] cluster serves as cofactor.

It is found in the plastid. The protein resides in the chloroplast thylakoid membrane. It carries out the reaction reduced [plastocyanin] + hnu + oxidized [2Fe-2S]-[ferredoxin] = oxidized [plastocyanin] + reduced [2Fe-2S]-[ferredoxin]. In terms of biological role, apoprotein for the two 4Fe-4S centers FA and FB of photosystem I (PSI); essential for photochemical activity. FB is the terminal electron acceptor of PSI, donating electrons to ferredoxin. The C-terminus interacts with PsaA/B/D and helps assemble the protein into the PSI complex. Required for binding of PsaD and PsaE to PSI. PSI is a plastocyanin-ferredoxin oxidoreductase, converting photonic excitation into a charge separation, which transfers an electron from the donor P700 chlorophyll pair to the spectroscopically characterized acceptors A0, A1, FX, FA and FB in turn. This is Photosystem I iron-sulfur center from Welwitschia mirabilis (Tree tumbo).